A 211-amino-acid polypeptide reads, in one-letter code: MNSNVENLPPHIIRRVYKEVSTLTSDPPEGIKIIPNEEDITDVQVHIEGPEGTPYAAGIFRMKLILGKDFPAAPPKGYFLTKIFHPNVSNNGEICVNVLKKDWKAELGIRHVLLTIKCLLIHPNPESALNEEAGRLLLENYEEYASRAKLMTEIHAQGSTLRGKDPTDPCSSASATVVSGDGPMAKKHAGDRDKKLAAKKKTDKKRALRRL.

The region spanning 11-157 (HIIRRVYKEV…AKLMTEIHAQ (147 aa)) is the UBC core domain. The active-site Glycyl thioester intermediate is Cys95. Residues 158–211 (GSTLRGKDPTDPCSSASATVVSGDGPMAKKHAGDRDKKLAAKKKTDKKRALRRL) are disordered. The span at 197–211 (AAKKKTDKKRALRRL) shows a compositional bias: basic residues.

It belongs to the ubiquitin-conjugating enzyme family.

It catalyses the reaction S-ubiquitinyl-[E1 ubiquitin-activating enzyme]-L-cysteine + [E2 ubiquitin-conjugating enzyme]-L-cysteine = [E1 ubiquitin-activating enzyme]-L-cysteine + S-ubiquitinyl-[E2 ubiquitin-conjugating enzyme]-L-cysteine.. Its pathway is protein modification; protein ubiquitination. Catalyzes the covalent attachment of ubiquitin to other proteins. Acts as an essential factor of the anaphase promoting complex/cyclosome (APC/C), a cell cycle-regulated ubiquitin ligase that controls progression through mitosis. Acts by specifically elongating 'Lys-11'-linked polyubiquitin chains initiated by the E2 enzyme ube2c/ubch10 on APC/C substrates, enhancing the degradation of APC/C substrates by the proteasome and promoting mitotic exit. This chain is Ubiquitin-conjugating enzyme E2 S-C (ube2s-c), found in Xenopus laevis (African clawed frog).